Here is a 70-residue protein sequence, read N- to C-terminus: Large ribosomal subunit protein eL24 (70 aa).

4 residues coordinate Zn(2+): cysteine 7, cysteine 10, cysteine 33, and cysteine 37. Residues 7-37 form a C4-type zinc finger; that stretch reads CSFCGYEIEPGKGKMVVEKDGTVLYFCSSKC.

It belongs to the eukaryotic ribosomal protein eL24 family. Part of the 50S ribosomal subunit. Forms a cluster with proteins L3 and L14. It depends on Zn(2+) as a cofactor.

Binds to the 23S rRNA. This chain is Large ribosomal subunit protein eL24, found in Methanocaldococcus jannaschii (strain ATCC 43067 / DSM 2661 / JAL-1 / JCM 10045 / NBRC 100440) (Methanococcus jannaschii).